The sequence spans 359 residues: Photosystem II protein D1 1 (359 aa).

3 helical membrane-spanning segments follow: residues 29 to 46 (YVGWFGVLMIPTLLAATT), 118 to 133 (HFLIGIFCYMGREWEL), and 142 to 156 (WICVAYSAPVAAASA). Position 118 (histidine 118) interacts with chlorophyll a. Tyrosine 126 serves as a coordination point for pheophytin a. The [CaMn4O5] cluster site is built by aspartate 170 and glutamate 189. The helical transmembrane segment at 197-218 (FHMMGVAGVFGGSLFSAMHGSL) threads the bilayer. Histidine 198 lines the chlorophyll a pocket. A quinone contacts are provided by residues histidine 215 and 264 to 265 (SF). A Fe cation-binding site is contributed by histidine 215. Histidine 272 contributes to the Fe cation binding site. A helical membrane pass occupies residues 274-288 (FLAAWPVVGIWFTAL). Positions 332, 333, 342, and 344 each coordinate [CaMn4O5] cluster. Positions 345–359 (AAESTPVALQAPAIG) are excised as a propeptide.

Belongs to the reaction center PufL/M/PsbA/D family. PSII is composed of 1 copy each of membrane proteins PsbA, PsbB, PsbC, PsbD, PsbE, PsbF, PsbH, PsbI, PsbJ, PsbK, PsbL, PsbM, PsbT, PsbX, PsbY, PsbZ, Psb30/Ycf12, peripheral proteins PsbO, CyanoQ (PsbQ), PsbU, PsbV and a large number of cofactors. It forms dimeric complexes. The D1/D2 heterodimer binds P680, chlorophylls that are the primary electron donor of PSII, and subsequent electron acceptors. It shares a non-heme iron and each subunit binds pheophytin, quinone, additional chlorophylls, carotenoids and lipids. D1 provides most of the ligands for the Mn4-Ca-O5 cluster of the oxygen-evolving complex (OEC). There is also a Cl(-1) ion associated with D1 and D2, which is required for oxygen evolution. The PSII complex binds additional chlorophylls, carotenoids and specific lipids. serves as cofactor. Post-translationally, tyr-161 forms a radical intermediate that is referred to as redox-active TyrZ, YZ or Y-Z. In terms of processing, C-terminally processed by CtpA; processing is essential to allow assembly of the oxygen-evolving complex and thus photosynthetic growth.

It localises to the cellular thylakoid membrane. It catalyses the reaction 2 a plastoquinone + 4 hnu + 2 H2O = 2 a plastoquinol + O2. In terms of biological role, photosystem II (PSII) is a light-driven water:plastoquinone oxidoreductase that uses light energy to abstract electrons from H(2)O, generating O(2) and a proton gradient subsequently used for ATP formation. It consists of a core antenna complex that captures photons, and an electron transfer chain that converts photonic excitation into a charge separation. The D1/D2 (PsbA/PsbD) reaction center heterodimer binds P680, the primary electron donor of PSII as well as several subsequent electron acceptors. This is Photosystem II protein D1 1 from Synechococcus sp. (strain WH7803).